The chain runs to 563 residues: MGLQACLLGLFALILSGKCSYSPEPDQRRTLPPGWVSLGRADPEEELSLTFALRQQNVERLSELVQAVSDPSSPQYGKYLTLENVADLVRPSPLTLRTVQKWLLAAGARKCHSVITQDFLTCWLSIRQAELLLPGAEFHHYVGGPTETHVVRSPHPYQLPQALAPHVDFVGGLHRFPPTSSLRQRPEPQVTGTVGLHLGVTPSVIRKRYNLTSQDVGSGTSNNSQACAQFLEQYFHDSDLAQFMRLFGGNFAHQASVARVVGQQGRGRAGIEASLDVQYLMSAGANISTWVYSSPGRHEGQEPFLQWLMLLSNESALPHVHTVSYGDDEDSLSSAYIQRVNTELMKAAARGLTLLFASGDSGAGCWSVSGRHQFRPTFPASSPYVTTVGGTSFQEPFLITNEIVDYISGGGFSNVFPRPSYQEEAVTKFLSSSPHLPPSSYFNASGRAYPDVAALSDGYWVVSNRVPIPWVSGTSASTPVFGGILSLINEHRILSGRPPLGFLNPRLYQQHGAGLFDVTRGCHESCLDEEVEGQGFCSGPGWDPVTGWGTPNFPALLKTLLNP.

Residues 1–19 (MGLQACLLGLFALILSGKC) form the signal peptide. The propeptide at 20-195 (SYSPEPDQRR…PEPQVTGTVG (176 aa)) is removed in mature form. An intrachain disulfide couples cysteine 111 to cysteine 122. The 365-residue stretch at 199 to 563 (GVTPSVIRKR…PALLKTLLNP (365 aa)) folds into the Peptidase S53 domain. Residues asparagine 210 and asparagine 222 are each glycosylated (N-linked (GlcNAc...) asparagine). Catalysis depends on charge relay system residues glutamate 272 and aspartate 276. N-linked (GlcNAc...) asparagine glycosylation is found at asparagine 286, asparagine 313, and asparagine 443. Cystine bridges form between cysteine 365-cysteine 526 and cysteine 522-cysteine 537. Catalysis depends on serine 475, which acts as the Charge relay system. The Ca(2+) site is built by aspartate 517 and valine 518. 3 residues coordinate Ca(2+): glycine 539, glycine 541, and aspartate 543.

In terms of assembly, monomer. Interacts with CLN5. Interacts with CLN3. It depends on Ca(2+) as a cofactor. Activated by autocatalytic proteolytical processing upon acidification. N-glycosylation is required for processing and activity.

It localises to the lysosome. The protein resides in the melanosome. The catalysed reaction is Release of an N-terminal tripeptide from a polypeptide, but also has endopeptidase activity.. Functionally, lysosomal serine protease with tripeptidyl-peptidase I activity. May act as a non-specific lysosomal peptidase which generates tripeptides from the breakdown products produced by lysosomal proteinases. Requires substrates with an unsubstituted N-terminus. This chain is Tripeptidyl-peptidase 1 (TPP1), found in Pan troglodytes (Chimpanzee).